The primary structure comprises 81 residues: Photosystem I iron-sulfur center (81 aa).

4Fe-4S ferredoxin-type domains lie at 2–31 (SHAV…MVPW) and 37–68 (GQIA…IRVY). [4Fe-4S] cluster is bound by residues cysteine 11, cysteine 14, cysteine 17, cysteine 21, cysteine 48, cysteine 51, cysteine 54, and cysteine 58.

As to quaternary structure, the cyanobacterial PSI reaction center is composed of one copy each of PsaA,B,C,D,E,F,I,J,K,L,M and X, and forms trimeric complexes. It depends on [4Fe-4S] cluster as a cofactor.

It localises to the cellular thylakoid membrane. The catalysed reaction is reduced [plastocyanin] + hnu + oxidized [2Fe-2S]-[ferredoxin] = oxidized [plastocyanin] + reduced [2Fe-2S]-[ferredoxin]. Its function is as follows. Apoprotein for the two 4Fe-4S centers FA and FB of photosystem I (PSI); essential for photochemical activity. FB is the terminal electron acceptor of PSI, donating electrons to ferredoxin. The C-terminus interacts with PsaA/B/D and helps assemble the protein into the PSI complex. Required for binding of PsaD and PsaE to PSI. PSI is a plastocyanin/cytochrome c6-ferredoxin oxidoreductase, converting photonic excitation into a charge separation, which transfers an electron from the donor P700 chlorophyll pair to the spectroscopically characterized acceptors A0, A1, FX, FA and FB in turn. This chain is Photosystem I iron-sulfur center, found in Prochlorococcus marinus subsp. pastoris (strain CCMP1986 / NIES-2087 / MED4).